The primary structure comprises 513 residues: t-SNARE domain-containing protein 1 (513 aa).

2 disordered regions span residues 1-23 (MSYG…GPSR) and 49-128 (ESKL…KPNF). A compositionally biased stretch (gly residues) spans 7–19 (ARGGGLGSRGPFG). Phosphoserine is present on S378. The t-SNARE coiled-coil homology domain maps to 416–478 (LEAIRLREEA…EAARQLLAGA (63 aa)). The chain crosses the membrane as a helical span at residues 491-511 (CFLSAGVTALLVIIIIIATSV).

Its subcellular location is the membrane. This chain is t-SNARE domain-containing protein 1 (TSNARE1), found in Homo sapiens (Human).